We begin with the raw amino-acid sequence, 836 residues long: Probable ribonuclease ZC3H12B (836 aa).

The interval 1–92 (MTATAEVETP…SPCLDRPSFS (92 aa)) is disordered. A compositionally biased stretch (basic and acidic residues) spans 8-28 (ETPKMEKSASKEEKQQPKQDS). A compositionally biased stretch (acidic residues) spans 35–46 (DSEEWMSSESDP). Positions 50–60 (SLKSSDNSKSC) are enriched in polar residues. A compositionally biased stretch (basic residues) spans 70 to 80 (KEMHSKPHRQL). In terms of domain architecture, RNase NYN spans 190–345 (LRPVVIDGSN…LGRHGPSLEN (156 aa)). The C3H1-type zinc-finger motif lies at 355–380 (EHKKQPCPYGKKCTYGHKCKYYHPER).

Belongs to the ZC3H12 family. The cofactor is Mg(2+).

Its function is as follows. May function as RNase and regulate the levels of target RNA species. The sequence is that of Probable ribonuclease ZC3H12B (ZC3H12B) from Homo sapiens (Human).